The sequence spans 701 residues: Polyribonucleotide nucleotidyltransferase (701 aa).

Mg(2+) contacts are provided by Asp-487 and Asp-493. A KH domain is found at 554 to 613 (PTMIAMKIDTDKIRDVIGKGGATIRAICEETKASIDIEDDGSIKIFGETKEAAEAARQRV). An S1 motif domain is found at 623 to 691 (GKIYVGKVER…NRGRIKLSIK (69 aa)).

Belongs to the polyribonucleotide nucleotidyltransferase family. Component of the RNA degradosome, which is a multiprotein complex involved in RNA processing and mRNA degradation. Mg(2+) is required as a cofactor.

The protein localises to the cytoplasm. It carries out the reaction RNA(n+1) + phosphate = RNA(n) + a ribonucleoside 5'-diphosphate. Involved in mRNA degradation. Catalyzes the phosphorolysis of single-stranded polyribonucleotides processively in the 3'- to 5'-direction. This chain is Polyribonucleotide nucleotidyltransferase, found in Pseudomonas fluorescens (strain SBW25).